The chain runs to 428 residues: FAD-dependent monooxygenase kojA (428 aa).

FAD contacts are provided by residues 52–60 (RLHKGPHYP) and 328–329 (SV).

This sequence belongs to the aromatic-ring hydroxylase family. It depends on FAD as a cofactor.

Probable FAD-dependent monooxygenase; part of the gene cluster that mediates the biosynthesis of 5-hydroxy-2-hydroxymethyl-1,4-pyrone, also know as kojic acid, a by-product in the fermentation process of malting rice that acts as a chelation agent. Glucose might be converted to kojic acid by a combination of dehydrogenase and dehydratase reactions involving kojA and probably additional enzymes. The chain is FAD-dependent monooxygenase kojA from Aspergillus flavus (strain ATCC 200026 / FGSC A1120 / IAM 13836 / NRRL 3357 / JCM 12722 / SRRC 167).